A 140-amino-acid polypeptide reads, in one-letter code: 3-hydroxyacyl-[acyl-carrier-protein] dehydratase FabZ (140 aa).

Residue His48 is part of the active site.

The protein belongs to the thioester dehydratase family. FabZ subfamily.

Its subcellular location is the cytoplasm. The enzyme catalyses a (3R)-hydroxyacyl-[ACP] = a (2E)-enoyl-[ACP] + H2O. In terms of biological role, involved in unsaturated fatty acids biosynthesis. Catalyzes the dehydration of short chain beta-hydroxyacyl-ACPs and long chain saturated and unsaturated beta-hydroxyacyl-ACPs. The polypeptide is 3-hydroxyacyl-[acyl-carrier-protein] dehydratase FabZ (Caldicellulosiruptor bescii (strain ATCC BAA-1888 / DSM 6725 / KCTC 15123 / Z-1320) (Anaerocellum thermophilum)).